A 387-amino-acid chain; its full sequence is Muscleblind-like protein 1 (387 aa).

The residue at position 6 (threonine 6) is a Phosphothreonine. 4 C3H1-type zinc fingers span residues 13–41, 47–73, 178–206, and 214–240; these read WLTLEVCREFQRGTCSRPDTECKFAHPSK, NGRVIACFDSLKGRCSRENCKYLHPPP, TDRLEVCREYQRGNCNRGENDCRFAHPAD, and DNTVTVCMDYIKGRCSREKCKYFHPPA.

It belongs to the muscleblind family. As to quaternary structure, interacts with DDX1 and YBX1. Interacts with HNRNPH1; the interaction in RNA-independent. Interacts with RBPMS; the interaction allows cooperative assembly of RNA-bound stable cell-specific alternative splicing regulatory complexes.

Its subcellular location is the nucleus. The protein resides in the cytoplasm. It localises to the cytoplasmic granule. In terms of biological role, mediates pre-mRNA alternative splicing regulation. Acts either as activator or repressor of splicing on specific pre-mRNA targets. Inhibits cardiac troponin-T (TNNT2) pre-mRNA exon inclusion but induces insulin receptor (IR) pre-mRNA exon inclusion in muscle. Antagonizes the alternative splicing activity pattern of CELF proteins. Regulates the TNNT2 exon 5 skipping through competition with U2AF2. Inhibits the formation of the spliceosome A complex on intron 4 of TNNT2 pre-mRNA. Binds to the stem-loop structure within the polypyrimidine tract of TNNT2 intron 4 during spliceosome assembly. Binds to the 5'-YGCU(U/G)Y-3'consensus sequence. Binds to the IR RNA. Binds to expanded CUG repeat RNA, which folds into a hairpin structure containing GC base pairs and bulged, unpaired U residues. Together with RNA binding proteins RBPMS and RBFOX2, activates vascular smooth muscle cells alternative splicing events. Regulates NCOR2 alternative splicing. This chain is Muscleblind-like protein 1, found in Rattus norvegicus (Rat).